We begin with the raw amino-acid sequence, 120 residues long: NAD(P)H-quinone oxidoreductase subunit 3 (120 aa).

A run of 3 helical transmembrane segments spans residues 6–26, 64–84, and 89–109; these read GYDA…LALV, MFAL…PWAV, and LGLL…VALA.

The protein belongs to the complex I subunit 3 family. In terms of assembly, NDH-1 can be composed of about 15 different subunits; different subcomplexes with different compositions have been identified which probably have different functions.

The protein localises to the cellular thylakoid membrane. It catalyses the reaction a plastoquinone + NADH + (n+1) H(+)(in) = a plastoquinol + NAD(+) + n H(+)(out). The enzyme catalyses a plastoquinone + NADPH + (n+1) H(+)(in) = a plastoquinol + NADP(+) + n H(+)(out). NDH-1 shuttles electrons from an unknown electron donor, via FMN and iron-sulfur (Fe-S) centers, to quinones in the respiratory and/or the photosynthetic chain. The immediate electron acceptor for the enzyme in this species is believed to be plastoquinone. Couples the redox reaction to proton translocation, and thus conserves the redox energy in a proton gradient. Cyanobacterial NDH-1 also plays a role in inorganic carbon-concentration. The sequence is that of NAD(P)H-quinone oxidoreductase subunit 3 from Prochlorococcus marinus (strain SARG / CCMP1375 / SS120).